The sequence spans 179 residues: Dual-action ribosomal maturation protein DarP (179 aa).

This sequence belongs to the DarP family.

Its subcellular location is the cytoplasm. Functionally, member of a network of 50S ribosomal subunit biogenesis factors which assembles along the 30S-50S interface, preventing incorrect 23S rRNA structures from forming. Promotes peptidyl transferase center (PTC) maturation. In Erwinia tasmaniensis (strain DSM 17950 / CFBP 7177 / CIP 109463 / NCPPB 4357 / Et1/99), this protein is Dual-action ribosomal maturation protein DarP.